The chain runs to 2711 residues: Chromodomain-helicase-DNA-binding protein 6 (2711 aa).

Composition is skewed to basic and acidic residues over residues 1–12 (MKMKIQKKEKQL), 100–115 (EPGE…DREP), 122–151 (EPKE…DGVK), and 158–171 (EASG…KRSC). 2 disordered regions span residues 1 to 52 (MKMK…EEAA) and 66 to 243 (EEAD…QVKR). A required for DNA-dependent ATPase activity region spans residues 1-746 (MKMKIQKKEK…MMELRKCCNH (746 aa)). Residues 214–224 (SLPNPSLQSPE) are compositionally biased toward low complexity. Chromo domains follow at residues 291–342 (NIIE…KDPR) and 374–438 (IEID…KHVE). A Helicase ATP-binding domain is found at 472–646 (LFNWYNRKNC…FSLLNFLEPS (175 aa)). 485 to 492 (DEMGLGKT) serves as a coordination point for ATP. Positions 597–600 (DEAH) match the DEAH box motif. One can recognise a Helicase C-terminal domain in the interval 786–955 (LIDKLLPKLI…LSKMEVEDLL (170 aa)). Positions 1318 to 1389 (SLSAEQGVTD…SDPDKSPWPV (72 aa)) are disordered. Residues 1320-1329 (SAEQGVTDGT) are compositionally biased toward polar residues. Basic and acidic residues predominate over residues 1332 to 1350 (IPERGNIDKEDSAEDKLDG). Positions 1448–1502 (RWTRREQADFYRTVSSFGVVYDQEKKAFDWTQFRIISRLDKKSDESLEHYFYSFV) constitute a Myb-like domain. Residue serine 1865 is modified to Phosphoserine. Disordered regions lie at residues 1951–1978 (SEDS…TVEG), 1997–2059 (EPWK…ASGI), 2124–2147 (LPTP…ATEH), 2321–2350 (TTLS…QAEK), 2373–2419 (GFGT…RGFL), 2550–2602 (SASL…ITTS), and 2641–2711 (RHSE…EDTN). Positions 2017 to 2036 (SEPKPEDMDFENKDDYEKDG) are enriched in basic and acidic residues. Low complexity-rich tracts occupy residues 2130–2140 (SSSAGSRSSLS) and 2333–2349 (ATSS…SQAE). Low complexity predominate over residues 2550–2563 (SASLASTKSGTSAT). Residues 2565–2586 (KSTEDKLSGHDVNTDALVDDKP) show a composition bias toward basic and acidic residues. Polar residues-rich tracts occupy residues 2591–2602 (FSDQSEPTITTS) and 2677–2688 (SDQNCTESSATV). The segment covering 2690 to 2711 (PEREHVAQAREEGLKDSNEDTN) has biased composition (basic and acidic residues).

This sequence belongs to the SNF2/RAD54 helicase family. In terms of assembly, interacts with NFE2L2; involved in activation of the transcription. As to expression, widely expressed.

It localises to the nucleus. The protein resides in the nucleoplasm. It catalyses the reaction ATP + H2O = ADP + phosphate + H(+). In terms of biological role, ATP-dependent chromatin-remodeling factor. Regulates transcription by disrupting nucleosomes in a largely non-sliding manner which strongly increases the accessibility of chromatin. Activates transcription of specific genes in response to oxidative stress through interaction with NFE2L2. The polypeptide is Chromodomain-helicase-DNA-binding protein 6 (Chd6) (Mus musculus (Mouse)).